Reading from the N-terminus, the 274-residue chain is Nitrate import ATP-binding protein NrtD (274 aa).

One can recognise an ABC transporter domain in the interval L17–E250. G53–S60 provides a ligand contact to ATP.

The protein belongs to the ABC transporter superfamily. Nitrate/nitrite/cyanate uptake transporter (NitT) (TC 3.A.1.16) family. As to quaternary structure, the complex is composed of two ATP-binding proteins (NrtC and NrtD), two transmembrane proteins (NrtB) and a solute-binding protein (NrtA).

It is found in the cell inner membrane. The enzyme catalyses nitrate(out) + ATP + H2O = nitrate(in) + ADP + phosphate + H(+). Its function is as follows. Part of the ABC transporter complex NrtABCD involved in nitrate uptake. The complex is probably also involved in nitrite transport. Probably responsible for energy coupling to the transport system. This is Nitrate import ATP-binding protein NrtD from Synechococcus elongatus (strain ATCC 33912 / PCC 7942 / FACHB-805) (Anacystis nidulans R2).